Here is a 219-residue protein sequence, read N- to C-terminus: Leukocyte surface antigen CD53 (219 aa).

The Cytoplasmic portion of the chain corresponds to 1–11 (MGMSSLKLLKY). A helical membrane pass occupies residues 12–32 (VLFFFNLLFWICGCCILGFGI). At 33–54 (YLLIHNNFGVLFHNLPSLTLGN) the chain is on the extracellular side. The chain crosses the membrane as a helical span at residues 55–69 (VFVIVGSIIMVVAFL). Topologically, residues 70-80 (GCMGSIKENKC) are cytoplasmic. The helical transmembrane segment at 81-106 (LLMSFFILLLIILLAEVTLAILLFVY) threads the bilayer. The Extracellular portion of the chain corresponds to 107–181 (EQKLNEYVAK…AKARLWFHSN (75 aa)). 2 N-linked (GlcNAc...) asparagine glycosylation sites follow: N129 and N148. Residues 182 to 206 (FLYIGIITICVCVIEVLGMSFALTL) traverse the membrane as a helical segment. Residues 207–219 (NCQIDKTSQTIGL) lie on the Cytoplasmic side of the membrane.

It belongs to the tetraspanin (TM4SF) family. As to quaternary structure, interacts with SCIMP. Interacts with CD45/PTPRC. Interacts with IL7R. Interacts with RBL2 and PPP2CA. B-cells, monocytes, macrophages, neutrophils, single (CD4 or CD8) positive thymocytes and peripheral T-cells.

It is found in the cell membrane. Its subcellular location is the cell junction. The protein resides in the membrane. It localises to the synapse. Its function is as follows. Structural component of specialized membrane microdomains known as tetraspanin-enriched microdomains (TERMs), which act as platforms for receptor clustering and signaling. Participates thereby in diverse biological functions such as cell signal transduction, adhesion, migration and protein trafficking. Plays a role in the activation of monocytes and B-cells. Acts as an essential regulator of B-cell development by promoting interleukin-7 receptor/IL7R signaling. Also promotes, in B-cells, the BCR signaling by recruiting PKC to the plasma membrane in order to phosphorylate its substrates. Plays an essential role in B- and T-cells homing to lymph nodes by stabilizing L-selectin/SELL cell surface expression. Also mediates metabolic and inflammatory functions in hepatocytes and adipose tissue by promoting TNF-alpha and LPS signaling independent of the immune compartment. The polypeptide is Leukocyte surface antigen CD53 (CD53) (Homo sapiens (Human)).